The chain runs to 461 residues: GTPase Der (461 aa).

EngA-type G domains lie at 9 to 171 (KTIA…DLNQ) and 200 to 371 (IQVG…ECFS). Residues 15–22 (GQPNVGKS), 62–66 (DTGGM), 123–126 (NKID), 206–213 (GRVNVGKS), 253–257 (DTAGI), and 317–320 (NKWD) contribute to the GTP site. The 85-residue stretch at 372–456 (KRIPTSLLNS…PLILNAKDKK (85 aa)) folds into the KH-like domain.

The protein belongs to the TRAFAC class TrmE-Era-EngA-EngB-Septin-like GTPase superfamily. EngA (Der) GTPase family. In terms of assembly, associates with the 50S ribosomal subunit.

Its function is as follows. GTPase that plays an essential role in the late steps of ribosome biogenesis. The polypeptide is GTPase Der (Helicobacter pylori (strain Shi470)).